The following is a 663-amino-acid chain: MNDRISINLIYLVLTFCCVSAATVRTAKNDDIQKFTIQMIGYSPQKTDDYVAVSIEATPGYVVAFEPMAHADRVHHMLLYGCTMPASEQGFWRGMETCGWGGGSYILYAWARNAPNLVLPKDVAFSVGHEQDGIKYFVLQVHYAQPFAGEVHDFSGVTMHISQKKPMNLAAVMLFVSGTPIPPQLPAFQNNITCMFESSTPIHPFAFRTHTHAMGRLVSAFFKHDGHWTKIGKRNPQWPQLFEGIPSKLMIGSGDQMSASCRFDSMDKNRTVNMGAMGVDEMCNFYMMFHYDAKLDNPYPQGAICAKDYPSKMIDYPKDGFELLPSRPELEHHAHQSKVPFGIVQEAIHENLGGVKLGQVAGLAFNNEQQLLVFQRAGRVWDASTFDNYNILLDKKPIADPVILVISYSGNQTKLERKLGGGQFYLPHGIYVDKDGFVYTTDVGSHTVAKWKIEGNELKNIWTSGELLMPGSDQHHYCKPTGITRVEDQLYVTDGYCNSRVVVLDLNGKRIRQFGLPGEDAGQFNLPHDIVSDSAGRLLVTDRENGRVQHMTTQGHVIEEFKSTMFTNIYSAASHEDYVFMVPGRPIMGHETEGIAVFVGRSGTGLIEYAFGPTTKGKREQMGPQFGQPHCLRVCPDGGHIFVGDIAEGKARLWQFKIRHDQN.

The first 21 residues, 1-21 (MNDRISINLIYLVLTFCCVSA), serve as a signal peptide directing secretion. The segment at 1–300 (MNDRISINLI…YDAKLDNPYP (300 aa)) is peptidylglycine alpha-hydroxylating monooxygenase. Cu(2+) contacts are provided by His-75 and His-76. A disulfide bridge connects residues Cys-82 and Cys-98. His-142 contributes to the Cu(2+) binding site. Asn-191 carries an N-linked (GlcNAc...) asparagine glycan. Disulfide bonds link Cys-194-Cys-305 and Cys-261-Cys-283. Cu(2+)-binding residues include His-210 and His-212. Asn-269 carries an N-linked (GlcNAc...) asparagine glycan. Residue Met-282 coordinates Cu(2+). Residues 301-663 (QGAICAKDYP…WQFKIRHDQN (363 aa)) form a peptidyl-alpha-hydroxyglycine alpha-amidating lyase region. A protein is bound at residue Arg-376. The N-linked (GlcNAc...) asparagine glycan is linked to Asn-411. 4 NHL repeats span residues 411 to 454 (NQTK…WKIE), 464 to 507 (SGEL…LDLN), 511 to 554 (IRQF…MTTQ), and 626 to 656 (FGQP…LWQF). The cysteines at positions 478 and 497 are disulfide-linked. 2 residues coordinate a protein: Tyr-496 and Arg-543.

This sequence in the C-terminal section; belongs to the peptidyl-alpha-hydroxyglycine alpha-amidating lyase family. The protein in the N-terminal section; belongs to the copper type II ascorbate-dependent monooxygenase family. Monomer. Zn(2+) serves as cofactor. The cofactor is Cu(2+).

It localises to the secreted. It carries out the reaction a [peptide]-C-terminal glycine + 2 L-ascorbate + O2 = a [peptide]-C-terminal (2S)-2-hydroxyglycine + 2 monodehydro-L-ascorbate radical + H2O. It catalyses the reaction a [peptide]-C-terminal (2S)-2-hydroxyglycine = a [peptide]-C-terminal amide + glyoxylate. Functionally, probable bifunctional enzyme that catalyzes 2 sequential steps in C-terminal alpha-amidation of peptides. The monooxygenase part produces an unstable peptidyl(2-hydroxyglycine) intermediate that is dismutated to glyoxylate and the corresponding desglycine peptide amide by the lyase part. C-terminal amidation of peptides such as neuropeptides is essential for full biological activity. In Caenorhabditis elegans, this protein is Probable peptidyl-glycine alpha-amidating monooxygenase pamn-1.